The sequence spans 274 residues: 4-hydroxy-tetrahydrodipicolinate reductase (274 aa).

7–12 (GVTGRM) contacts NAD(+). Residue arginine 40 coordinates NADP(+). Residues 103–105 (GTT) and 127–130 (SANF) contribute to the NAD(+) site. Histidine 160 functions as the Proton donor/acceptor in the catalytic mechanism. A (S)-2,3,4,5-tetrahydrodipicolinate-binding site is contributed by histidine 161. Lysine 164 (proton donor) is an active-site residue. Residue 170–171 (GT) coordinates (S)-2,3,4,5-tetrahydrodipicolinate.

It belongs to the DapB family. In terms of assembly, homotetramer.

It localises to the cytoplasm. The enzyme catalyses (S)-2,3,4,5-tetrahydrodipicolinate + NAD(+) + H2O = (2S,4S)-4-hydroxy-2,3,4,5-tetrahydrodipicolinate + NADH + H(+). It catalyses the reaction (S)-2,3,4,5-tetrahydrodipicolinate + NADP(+) + H2O = (2S,4S)-4-hydroxy-2,3,4,5-tetrahydrodipicolinate + NADPH + H(+). Its pathway is amino-acid biosynthesis; L-lysine biosynthesis via DAP pathway; (S)-tetrahydrodipicolinate from L-aspartate: step 4/4. In terms of biological role, catalyzes the conversion of 4-hydroxy-tetrahydrodipicolinate (HTPA) to tetrahydrodipicolinate. This chain is 4-hydroxy-tetrahydrodipicolinate reductase, found in Blochmanniella floridana.